We begin with the raw amino-acid sequence, 771 residues long: 5-methyltetrahydropteroyltriglutamate--homocysteine methyltransferase (771 aa).

5-methyltetrahydropteroyltri-L-glutamate is bound by residues 13–16 and K128; that span reads RELK. Residues 451–453 and E504 contribute to the L-homocysteine site; that span reads IGS. Residues 451-453 and E504 each bind L-methionine; that span reads IGS. 5-methyltetrahydropteroyltri-L-glutamate contacts are provided by residues 535–536 and W581; that span reads RC. An L-homocysteine-binding site is contributed by D619. Residue D619 participates in L-methionine binding. Residue E625 coordinates 5-methyltetrahydropteroyltri-L-glutamate. The Zn(2+) site is built by H661, C663, and E685. Residue H714 is the Proton donor of the active site. C746 contributes to the Zn(2+) binding site.

It belongs to the vitamin-B12 independent methionine synthase family. The cofactor is Zn(2+).

It catalyses the reaction 5-methyltetrahydropteroyltri-L-glutamate + L-homocysteine = tetrahydropteroyltri-L-glutamate + L-methionine. The protein operates within amino-acid biosynthesis; L-methionine biosynthesis via de novo pathway; L-methionine from L-homocysteine (MetE route): step 1/1. Functionally, catalyzes the transfer of a methyl group from 5-methyltetrahydrofolate to homocysteine resulting in methionine formation. In Nitrobacter winogradskyi (strain ATCC 25391 / DSM 10237 / CIP 104748 / NCIMB 11846 / Nb-255), this protein is 5-methyltetrahydropteroyltriglutamate--homocysteine methyltransferase.